The following is a 179-amino-acid chain: Large ribosomal subunit protein uL6 (179 aa).

This sequence belongs to the universal ribosomal protein uL6 family. Part of the 50S ribosomal subunit.

In terms of biological role, this protein binds to the 23S rRNA, and is important in its secondary structure. It is located near the subunit interface in the base of the L7/L12 stalk, and near the tRNA binding site of the peptidyltransferase center. In Geotalea daltonii (strain DSM 22248 / JCM 15807 / FRC-32) (Geobacter daltonii), this protein is Large ribosomal subunit protein uL6.